The primary structure comprises 122 residues: uncharacterized protein (122 aa).

This is an uncharacterized protein from Dictyostelium discoideum (Social amoeba).